The sequence spans 101 residues: MSMAEGDTLISVDYEIFGKVQGVFFRKYTQAEGKKLGLVGWVQNTDQGTVQGQLQGPASKVRHMQEWLETKGSPKSHIDRASFHNEKVIVKLDYTDFQIVK.

Position 2 is an N-acetylserine (serine 2). At serine 2 the chain carries N-acetylalanine. Residues 11-101 (SVDYEIFGKV…LDYTDFQIVK (91 aa)) form the Acylphosphatase-like domain. Catalysis depends on residues arginine 26 and asparagine 44.

Belongs to the acylphosphatase family. As to expression, organ-common type isozyme is found in many different tissues.

It catalyses the reaction an acyl phosphate + H2O = a carboxylate + phosphate + H(+). In Bos taurus (Bovine), this protein is Acylphosphatase-1 (ACYP1).